A 664-amino-acid polypeptide reads, in one-letter code: Probable 3',5'-cyclic phosphodiesterase pde-1 (664 aa).

2 disordered regions span residues 24 to 60 (TSSASEEHGDSDKKLLSVQLITPRDEEEQTSSRSIKI) and 113 to 142 (RNQKEKSNSDDNCQEKEPTSPSSSRKKSYD). 2 stretches are compositionally biased toward basic and acidic residues: residues 28–38 (SEEHGDSDKKL) and 114–130 (NQKEKSNSDDNCQEKEP). Residues 256–634 (VQCPIPPEIA…AHWKERAAKE (379 aa)) form the PDEase domain. Catalysis depends on His333, which acts as the Proton donor. Residues His337, His373, Asp374, and Asp480 each coordinate a divalent metal cation. Disordered regions lie at residues 564 to 597 (DSLFPPSVDGGDDKSPSNALSPLPDLRNSSTSPS) and 630 to 664 (RAAKEEEERKIKEAAEAEAAAKQVEENKENGVTTN). A compositionally biased stretch (basic and acidic residues) spans 630-644 (RAAKEEEERKIKEAA).

Belongs to the cyclic nucleotide phosphodiesterase family. In terms of assembly, interacts with cmd-1 in the presence of Ca(2+). A divalent metal cation is required as a cofactor. In terms of tissue distribution, expressed in AFD thermosensory neurons.

It carries out the reaction a nucleoside 3',5'-cyclic phosphate + H2O = a nucleoside 5'-phosphate + H(+). In terms of biological role, redundantly with pde-5, plays a role in the AFD thermosensory neurons to regulate microvilli receptive ending morphology, possibly by regulating cGMP levels. The polypeptide is Probable 3',5'-cyclic phosphodiesterase pde-1 (pde-1) (Caenorhabditis elegans).